A 291-amino-acid polypeptide reads, in one-letter code: Probable ABC transporter permease protein PH1038 (291 aa).

8 helical membrane-spanning segments follow: residues 7–27 (PFFFLLPALTLMVPFVIYPVF), 75–95 (IVWIAIHLPTTIFLGLGFALL), 106–126 (IIKSIIFLGMVIPMVVGGLII), 133–153 (GAGVIPAFFKLIGIEKLAITW), 160–180 (ALFSVILGSIWIWTGFSMLMY), 208–228 (FVIWPLLRPITVVIVAMTLLW), 232–252 (IFDIVYVATGGGPGGASMVLA), and 267–287 (YAAVVAVLLTALTFIPALWLI). An ABC transmembrane type-1 domain is found at 71-286 (LIHNIVWIAI…ALTFIPALWL (216 aa)).

Belongs to the binding-protein-dependent transport system permease family. MalFG subfamily.

The protein resides in the cell membrane. Probably part of a binding-protein-dependent transport system PH1036/38/39. Probably responsible for the translocation of the substrate across the membrane. This is Probable ABC transporter permease protein PH1038 from Pyrococcus horikoshii (strain ATCC 700860 / DSM 12428 / JCM 9974 / NBRC 100139 / OT-3).